Consider the following 393-residue polypeptide: NAD(P)H-quinone oxidoreductase subunit H, chloroplastic (393 aa).

Belongs to the complex I 49 kDa subunit family. NDH is composed of at least 16 different subunits, 5 of which are encoded in the nucleus.

The protein localises to the plastid. It is found in the chloroplast thylakoid membrane. The catalysed reaction is a plastoquinone + NADH + (n+1) H(+)(in) = a plastoquinol + NAD(+) + n H(+)(out). It catalyses the reaction a plastoquinone + NADPH + (n+1) H(+)(in) = a plastoquinol + NADP(+) + n H(+)(out). Functionally, NDH shuttles electrons from NAD(P)H:plastoquinone, via FMN and iron-sulfur (Fe-S) centers, to quinones in the photosynthetic chain and possibly in a chloroplast respiratory chain. The immediate electron acceptor for the enzyme in this species is believed to be plastoquinone. Couples the redox reaction to proton translocation, and thus conserves the redox energy in a proton gradient. The polypeptide is NAD(P)H-quinone oxidoreductase subunit H, chloroplastic (Crucihimalaya wallichii (Rock-cress)).